A 524-amino-acid chain; its full sequence is Probable cytochrome P450 519C1 (524 aa).

A helical transmembrane segment spans residues 1-21 (MNILLLIFYFLVCFLIFDFIK). Cysteine 470 contacts heme.

The protein belongs to the cytochrome P450 family. Heme serves as cofactor.

The protein resides in the membrane. This Dictyostelium discoideum (Social amoeba) protein is Probable cytochrome P450 519C1 (cyp519C1).